Consider the following 954-residue polypeptide: Isoleucine--tRNA ligase (954 aa).

Residues 58–68 (PYANGDIHIGH) carry the 'HIGH' region motif. Glu572 serves as a coordination point for L-isoleucyl-5'-AMP. The 'KMSKS' region signature appears at 613–617 (KMSKS). Position 616 (Lys616) interacts with ATP. Zn(2+)-binding residues include Cys917, Cys920, Cys937, and Cys940.

Belongs to the class-I aminoacyl-tRNA synthetase family. IleS type 1 subfamily. In terms of assembly, monomer. The cofactor is Zn(2+).

The protein localises to the cytoplasm. It carries out the reaction tRNA(Ile) + L-isoleucine + ATP = L-isoleucyl-tRNA(Ile) + AMP + diphosphate. Catalyzes the attachment of isoleucine to tRNA(Ile). As IleRS can inadvertently accommodate and process structurally similar amino acids such as valine, to avoid such errors it has two additional distinct tRNA(Ile)-dependent editing activities. One activity is designated as 'pretransfer' editing and involves the hydrolysis of activated Val-AMP. The other activity is designated 'posttransfer' editing and involves deacylation of mischarged Val-tRNA(Ile). The sequence is that of Isoleucine--tRNA ligase from Photobacterium profundum (strain SS9).